The sequence spans 422 residues: CRISPR-associated endodeoxyribonuclease Cas12f1 (422 aa).

The tract at residues 1–126 (MIKVYRYEIV…PSYKRDIPLD (126 aa)) is recognition domain (REC). A wedge domain (WED) region spans residues 127–211 (LIKENISVNR…YLNISYDFEP (85 aa)). The segment at 212 to 220 (QTRVLDLNK) is linker. The tract at residues 221–370 (IMGIDLGVAV…IKIDPQYTSQ (150 aa)) is ruvC-I. Active-site residues include Asp225 and Glu324. Residues 371–399 (RCSECGNIDSGNRIGQAIFKCRACGYEAN) are target nucleic acid-binding (TNB). Residues Cys372, Cys375, Cys391, and Cys394 each contribute to the Zn(2+) site. A ruvC-II region spans residues 400–420 (ADYNAARNIAIPNIDKIIAES). Asp401 is a catalytic residue.

This sequence belongs to the CRISPR-associated endonuclease Cas12f family. In terms of assembly, an asymmetric homodimer. Guide RNA is probably required for dimerization. Mg(2+) is required as a cofactor. The cofactor is Zn(2+).

In terms of biological role, CRISPR (clustered regularly interspaced short palindromic repeat), is an adaptive immune system that provides protection against mobile genetic elements (viruses, transposable elements and conjugative plasmids). CRISPR clusters contain sequences complementary to antecedent mobile elements and target invading nucleic acids. CRISPR clusters are transcribed and processed into CRISPR RNA (crRNA), which requires a trans-encoded small RNA (tracrRNA), but not this protein. Recognizes a short motif in the CRISPR repeat sequences (the 5' PAM or protospacer adjacent motif, YTT in this organism) to help distinguish self versus nonself, as targets within the CRISPR locus do not have PAMs. Has dsDNA endonuclease activity upon expression in E.coli of this protein, a mini CRISPR array and the probable tracrRNA. Plasmid cleavage is centered around positions 19-24 base pairs 3' of PAM. The mini system protects E.coli against transformation by foreign plasmids. The chain is CRISPR-associated endodeoxyribonuclease Cas12f1 from Sulfoacidibacillus thermotolerans (Acidibacillus sulfuroxidans).